A 391-amino-acid polypeptide reads, in one-letter code: Tumor susceptibility gene 101 protein (391 aa).

At alanine 2 the chain carries N-acetylalanine. In terms of domain architecture, UEV spans 2–145 (AVSESQLKKM…GEEPPVFSRP (144 aa)). An interaction with CEP55 region spans residues 159–163 (PPNTS). The tract at residues 197–220 (YPATTSSQYPSQPPVTTVGPSRDG) is disordered. Polar residues predominate over residues 200–215 (TTSSQYPSQPPVTTVG). Threonine 221 bears the Phosphothreonine mark. The stretch at 237–317 (DKLRWRMKEE…NQSENNDIDE (81 aa)) forms a coiled coil. The PTAP/PSAP motif signature appears at 321–324 (PTAP). In terms of domain architecture, SB spans 323–391 (APLYKQILNL…RKTAGLSDLY (69 aa)).

Belongs to the ubiquitin-conjugating enzyme family. UEV subfamily. Component of the ESCRT-I complex (endosomal sorting complex required for transport I) which consists of TSG101, VPS28, a VPS37 protein (VPS37A to -D) and MVB12A or MVB12B in a 1:1:1:1 stoichiometry. Interacts with VPS37A, VPS37B and VPS37C. Component of an ESCRT-I complex (endosomal sorting complex required for transport I) which consists of TSG101, VPS28, VPS37A and UBAP1 in a 1:1:1:1 stoichiometry. Interacts with DMAP1. Interacts with GMCL. Interacts with ubiquitin, stathmin and AATF. Interacts with HGS; the interaction mediates the association with the ESCRT-0 complex. Interacts with GGA1 and GGA3. Interacts (via UEV domain) with PDCD6IP/AIP1. Interacts with VPS28, SNF8 and VPS36. Self-associates. Interacts with MVB12A; the association appears to be mediated by the TSG101-VPS37 binary subcomplex. Interacts with VPS37D. Interacts with LRSAM1. Interacts with CEP55; the interaction is required for cytokinesis. Interacts with PDCD6. Interacts with LITAF. Interacts with murine leukemia virus Gag polyprotein (via PSAP motif). Interacts with MGRN1. Interacts with ARRDC1; recruits TSG101 to the plasma membrane. In terms of processing, monoubiquitinated at multiple sites by LRSAM1 and by MGRN1. Ubiquitination inactivates it, possibly by regulating its shuttling between an active membrane-bound protein and an inactive soluble form. Ubiquitination by MGRN1 requires the presence of UBE2D1. As to expression, ubiquitous. Higher expression in brain and mammary gland. Lower expression in liver and tumoral tissues.

The protein resides in the cytoplasm. The protein localises to the early endosome membrane. It is found in the late endosome membrane. It localises to the cytoskeleton. Its subcellular location is the microtubule organizing center. The protein resides in the centrosome. The protein localises to the midbody. It is found in the midbody ring. It localises to the nucleus. Component of the ESCRT-I complex, a regulator of vesicular trafficking process. Binds to ubiquitinated cargo proteins and is required for the sorting of endocytic ubiquitinated cargos into multivesicular bodies (MVBs). Mediates the association between the ESCRT-0 and ESCRT-I complex. Required for completion of cytokinesis; the function requires CEP55. May be involved in cell growth and differentiation. Acts as a negative growth regulator. Required for the exosomal release of SDCBP, CD63 and syndecan. It may also play a role in the extracellular release of microvesicles that differ from the exosomes. In Mus musculus (Mouse), this protein is Tumor susceptibility gene 101 protein (Tsg101).